The chain runs to 327 residues: DNA-directed RNA polymerase subunit alpha (327 aa).

The alpha N-terminal domain (alpha-NTD) stretch occupies residues 1–233 (MVREKVKVST…NLFIPFLHVE (233 aa)). The segment at 266-327 (EQGFQYIFID…KKILDILEKK (62 aa)) is alpha C-terminal domain (alpha-CTD).

This sequence belongs to the RNA polymerase alpha chain family. In terms of assembly, in plastids the minimal PEP RNA polymerase catalytic core is composed of four subunits: alpha, beta, beta', and beta''. When a (nuclear-encoded) sigma factor is associated with the core the holoenzyme is formed, which can initiate transcription.

It is found in the plastid. The protein resides in the chloroplast. The enzyme catalyses RNA(n) + a ribonucleoside 5'-triphosphate = RNA(n+1) + diphosphate. Functionally, DNA-dependent RNA polymerase catalyzes the transcription of DNA into RNA using the four ribonucleoside triphosphates as substrates. The polypeptide is DNA-directed RNA polymerase subunit alpha (Barbarea verna (Land cress)).